Consider the following 421-residue polypeptide: Serine--tRNA ligase (421 aa).

231–233 is a binding site for L-serine; that stretch reads TAE. An ATP-binding site is contributed by 262–264; sequence RRE. Glu-285 lines the L-serine pocket. 349–352 is a binding site for ATP; the sequence is EISS. Position 384 (Ser-384) interacts with L-serine.

The protein belongs to the class-II aminoacyl-tRNA synthetase family. Type-1 seryl-tRNA synthetase subfamily. Homodimer. The tRNA molecule binds across the dimer.

Its subcellular location is the cytoplasm. It catalyses the reaction tRNA(Ser) + L-serine + ATP = L-seryl-tRNA(Ser) + AMP + diphosphate + H(+). The enzyme catalyses tRNA(Sec) + L-serine + ATP = L-seryl-tRNA(Sec) + AMP + diphosphate + H(+). It functions in the pathway aminoacyl-tRNA biosynthesis; selenocysteinyl-tRNA(Sec) biosynthesis; L-seryl-tRNA(Sec) from L-serine and tRNA(Sec): step 1/1. Functionally, catalyzes the attachment of serine to tRNA(Ser). Is also able to aminoacylate tRNA(Sec) with serine, to form the misacylated tRNA L-seryl-tRNA(Sec), which will be further converted into selenocysteinyl-tRNA(Sec). The protein is Serine--tRNA ligase of Hydrogenobaculum sp. (strain Y04AAS1).